A 174-amino-acid polypeptide reads, in one-letter code: MSAAEADRWAWLLVLSFVFGCNVLRILLPSFSFFMSRVLQKDAEQESQMRAEIQGMKQELSTVNMMDEFARYARLERKINKMTDKLKTHVKARTAQLAKIKWVISVAFYILQAALMVSLIWKYYSVPVAVVPSKWITPLDRLVAFPTRVAGGVGITCWILVCNKVVAIVLHPFS.

At 1 to 8 (MSAAEADR) the chain is on the lumenal side. The helical transmembrane segment at 9–29 (WAWLLVLSFVFGCNVLRILLP) threads the bilayer. Over 30–99 (SFSFFMSRVL…VKARTAQLAK (70 aa)) the chain is Cytoplasmic. Residues 39 to 94 (LQKDAEQESQMRAEIQGMKQELSTVNMMDEFARYARLERKINKMTDKLKTHVKART) adopt a coiled-coil conformation. The interaction with GET3/TRC40 stretch occupies residues 39 to 97 (LQKDAEQESQMRAEIQGMKQELSTVNMMDEFARYARLERKINKMTDKLKTHVKARTAQL). The chain crosses the membrane as a helical span at residues 100-120 (IKWVISVAFYILQAALMVSLI). Topologically, residues 121-148 (WKYYSVPVAVVPSKWITPLDRLVAFPTR) are lumenal. The chain crosses the membrane as a helical span at residues 149–169 (VAGGVGITCWILVCNKVVAIV). Over 170–174 (LHPFS) the chain is Cytoplasmic.

Belongs to the WRB/GET1 family. Component of the Golgi to ER traffic (GET) complex, which is composed of GET1/WRB, CAMLG/GET2 and GET3. Within the complex, GET1 and CAMLG form a heterotetramer which is stabilized by phosphatidylinositol binding and which binds to the GET3 homodimer. Interacts with CAMLG (via C-terminus). GET3 shows a higher affinity for CAMLG than for GET1.

The protein resides in the endoplasmic reticulum membrane. Required for the post-translational delivery of tail-anchored (TA) proteins to the endoplasmic reticulum. Together with CAMLG/GET2, acts as a membrane receptor for soluble GET3/TRC40, which recognizes and selectively binds the transmembrane domain of TA proteins in the cytosol. Required to ensure correct topology and ER insertion of CAMLG. The protein is Guided entry of tail-anchored proteins factor 1 of Bos taurus (Bovine).